Here is a 170-residue protein sequence, read N- to C-terminus: Small ribosomal subunit protein uS5 (170 aa).

The region spanning 13–76 (LTEKLIGVNR…DQARRSMVKI (64 aa)) is the S5 DRBM domain.

The protein belongs to the universal ribosomal protein uS5 family. Part of the 30S ribosomal subunit. Contacts proteins S4 and S8.

With S4 and S12 plays an important role in translational accuracy. In terms of biological role, located at the back of the 30S subunit body where it stabilizes the conformation of the head with respect to the body. In Laribacter hongkongensis (strain HLHK9), this protein is Small ribosomal subunit protein uS5.